The primary structure comprises 167 residues: Ureidoglycolate lyase (167 aa).

Belongs to the ureidoglycolate lyase family. In terms of assembly, homodimer. Ni(2+) is required as a cofactor.

The catalysed reaction is (S)-ureidoglycolate = urea + glyoxylate. It participates in nitrogen metabolism; (S)-allantoin degradation. Catalyzes the catabolism of the allantoin degradation intermediate (S)-ureidoglycolate, generating urea and glyoxylate. Involved in the utilization of allantoin as nitrogen source. This is Ureidoglycolate lyase from Pseudomonas putida (strain ATCC 700007 / DSM 6899 / JCM 31910 / BCRC 17059 / LMG 24140 / F1).